A 210-amino-acid chain; its full sequence is Ribosomal RNA large subunit methyltransferase E (210 aa).

5 residues coordinate S-adenosyl-L-methionine: Gly60, Trp62, Asp85, Asp101, and Asp126. The active-site Proton acceptor is the Lys166.

The protein belongs to the class I-like SAM-binding methyltransferase superfamily. RNA methyltransferase RlmE family.

It localises to the cytoplasm. The enzyme catalyses uridine(2552) in 23S rRNA + S-adenosyl-L-methionine = 2'-O-methyluridine(2552) in 23S rRNA + S-adenosyl-L-homocysteine + H(+). Its function is as follows. Specifically methylates the uridine in position 2552 of 23S rRNA at the 2'-O position of the ribose in the fully assembled 50S ribosomal subunit. The polypeptide is Ribosomal RNA large subunit methyltransferase E (Bordetella pertussis (strain Tohama I / ATCC BAA-589 / NCTC 13251)).